A 427-amino-acid polypeptide reads, in one-letter code: 5'-deoxyadenosine deaminase (427 aa).

Residues histidine 62 and histidine 64 each coordinate Zn(2+). Substrate is bound by residues glutamate 91 and histidine 183. A Zn(2+)-binding site is contributed by histidine 210. Glutamate 213 and aspartate 298 together coordinate substrate. Residue aspartate 298 coordinates Zn(2+).

Belongs to the metallo-dependent hydrolases superfamily. MTA/SAH deaminase family. In terms of assembly, homotetramer. Zn(2+) serves as cofactor.

It catalyses the reaction 5'-deoxyadenosine + H2O + H(+) = 5'-deoxyinosine + NH4(+). The enzyme catalyses S-adenosyl-L-homocysteine + H2O + H(+) = S-inosyl-L-homocysteine + NH4(+). It carries out the reaction S-methyl-5'-thioadenosine + H2O + H(+) = S-methyl-5'-thioinosine + NH4(+). The catalysed reaction is adenosine + H2O + H(+) = inosine + NH4(+). It participates in amino-acid biosynthesis; S-adenosyl-L-methionine biosynthesis. In terms of biological role, catalyzes the deamination of three SAM-derived enzymatic products, namely 5'-deoxyadenosine, S-adenosyl-L-homocysteine, and 5'-methylthioadenosine, to produce the inosine analogs. Can also deaminate adenosine. The preferred substrate for this enzyme is 5'-deoxyadenosine, but all these substrates are efficiently deaminated. Likely functions in a S-adenosyl-L-methionine (SAM) recycling pathway from S-adenosyl-L-homocysteine (SAH) produced from SAM-dependent methylation reactions. May also be involved in the recycling of 5'-deoxyadenosine, whereupon the 5'-deoxyribose moiety of 5'-deoxyinosine is further metabolized to deoxyhexoses used for the biosynthesis of aromatic amino acids in methanogens. In Methanothermobacter thermautotrophicus (strain ATCC 29096 / DSM 1053 / JCM 10044 / NBRC 100330 / Delta H) (Methanobacterium thermoautotrophicum), this protein is 5'-deoxyadenosine deaminase.